The chain runs to 115 residues: U3-lycotoxin-Ls1j (115 aa).

Positions 1–20 (MKFVLLFGVFLVTLFSYSSA) are cleaved as a signal peptide. The propeptide occupies 21-44 (EMLDDFDQADEDELLSLIEKEEAR). Intrachain disulfides connect C48–C63, C55–C72, C62–C87, and C74–C85.

This sequence belongs to the neurotoxin 19 (CSTX) family. 01 subfamily. Expressed by the venom gland.

It is found in the secreted. This is U3-lycotoxin-Ls1j from Lycosa singoriensis (Wolf spider).